A 341-amino-acid chain; its full sequence is Protein BIG GRAIN 1-like C (341 aa).

Disordered stretches follow at residues 28–61 (DGLQSDLKGSINENVSSSSSSPSPNKKDDKLTTL) and 76–138 (SSTT…SDDD). Residues 52-61 (NKKDDKLTTL) show a composition bias toward basic and acidic residues. Positions 76–92 (SSTTTTNSSDSSSFSSS) are enriched in low complexity. Residues 105 to 138 (KLAEQGKRSGDERQRTKRTVMDNDSRLFSKSDDD) show a composition bias toward basic and acidic residues.

It belongs to the BIG GRAIN 1 (BG1) plant protein family.

The protein resides in the cell membrane. Its function is as follows. Involved in auxin transport. Regulator of the auxin signaling pathway. The protein is Protein BIG GRAIN 1-like C of Arabidopsis thaliana (Mouse-ear cress).